An 87-amino-acid polypeptide reads, in one-letter code: UPF0297 protein Sca_1229 (87 aa).

This sequence belongs to the UPF0297 family.

The polypeptide is UPF0297 protein Sca_1229 (Staphylococcus carnosus (strain TM300)).